We begin with the raw amino-acid sequence, 108 residues long: Abdominal ganglion neuropeptide R3-14 (108 aa).

The first 23 residues, 1-23 (MQVLHLCLAVSIAVALLSQAAWS), serve as a signal peptide directing secretion. Residues Glu24 and Glu52 each carry the pyrrolidone carboxylic acid (Glu); partial modification. Gln66 bears the Pyrrolidone carboxylic acid mark.

In terms of processing, the partial formation of pyroglutamate from N-terminal glutamic acid in peptides isolated from single cells is detected by mass spectrometry. There are indications this modification depends on a heat sensitive factor. In terms of tissue distribution, neurons R3-R14. A cluster of 12 giant neurons located on the right side of the abdominal ganglion.

The protein localises to the secreted. Functionally, HRBP is a myoactive peptide that excites Aplysia heart and enhances gut motility in vitro. This is Abdominal ganglion neuropeptide R3-14 from Aplysia californica (California sea hare).